The chain runs to 24 residues: U4-ctenitoxin-Co1b (24 aa).

Post-translationally, disulfide bonds are present. In terms of tissue distribution, expressed by the venom gland.

The protein localises to the secreted. Its function is as follows. Omega-agatoxins are antagonists of voltage-gated calcium channels (Cav). This chain is U4-ctenitoxin-Co1b, found in Ctenus ornatus (Brazilian spider).